Consider the following 299-residue polypeptide: ATP phosphoribosyltransferase (299 aa).

The protein belongs to the ATP phosphoribosyltransferase family. Long subfamily. Requires Mg(2+) as cofactor.

It localises to the cytoplasm. It carries out the reaction 1-(5-phospho-beta-D-ribosyl)-ATP + diphosphate = 5-phospho-alpha-D-ribose 1-diphosphate + ATP. It functions in the pathway amino-acid biosynthesis; L-histidine biosynthesis; L-histidine from 5-phospho-alpha-D-ribose 1-diphosphate: step 1/9. Its activity is regulated as follows. Feedback inhibited by histidine. Catalyzes the condensation of ATP and 5-phosphoribose 1-diphosphate to form N'-(5'-phosphoribosyl)-ATP (PR-ATP). Has a crucial role in the pathway because the rate of histidine biosynthesis seems to be controlled primarily by regulation of HisG enzymatic activity. This chain is ATP phosphoribosyltransferase, found in Shewanella halifaxensis (strain HAW-EB4).